The following is a 304-amino-acid chain: Glyceraldehyde-3-phosphate dehydrogenase 2 (304 aa).

Residues 1–2 (RI), Asp-22, and Arg-67 contribute to the NAD(+) site. D-glyceraldehyde 3-phosphate-binding positions include 138–140 (SCT), Thr-169, 198–199 (TG), and Arg-221. Catalysis depends on Cys-139, which acts as the Nucleophile. Asn-303 contributes to the NAD(+) binding site.

It belongs to the glyceraldehyde-3-phosphate dehydrogenase family. In terms of assembly, homotetramer.

The protein resides in the cytoplasm. It catalyses the reaction D-glyceraldehyde 3-phosphate + phosphate + NAD(+) = (2R)-3-phospho-glyceroyl phosphate + NADH + H(+). Its pathway is carbohydrate degradation; glycolysis; pyruvate from D-glyceraldehyde 3-phosphate: step 1/5. The protein is Glyceraldehyde-3-phosphate dehydrogenase 2 (Gapdh2) of Drosophila subobscura (Fruit fly).